Consider the following 199-residue polypeptide: ATP-dependent Clp protease proteolytic subunit (199 aa).

Catalysis depends on serine 97, which acts as the Nucleophile. Residue histidine 122 is part of the active site.

It belongs to the peptidase S14 family. In terms of assembly, fourteen ClpP subunits assemble into 2 heptameric rings which stack back to back to give a disk-like structure with a central cavity, resembling the structure of eukaryotic proteasomes.

It is found in the cytoplasm. It carries out the reaction Hydrolysis of proteins to small peptides in the presence of ATP and magnesium. alpha-casein is the usual test substrate. In the absence of ATP, only oligopeptides shorter than five residues are hydrolyzed (such as succinyl-Leu-Tyr-|-NHMec, and Leu-Tyr-Leu-|-Tyr-Trp, in which cleavage of the -Tyr-|-Leu- and -Tyr-|-Trp bonds also occurs).. In terms of biological role, cleaves peptides in various proteins in a process that requires ATP hydrolysis. Has a chymotrypsin-like activity. Plays a major role in the degradation of misfolded proteins. In Geobacter metallireducens (strain ATCC 53774 / DSM 7210 / GS-15), this protein is ATP-dependent Clp protease proteolytic subunit.